Here is a 521-residue protein sequence, read N- to C-terminus: 2-isopropylmalate synthase (521 aa).

The Pyruvate carboxyltransferase domain maps to Val12–Thr274. Residues Asp21, His209, His211, and Asn245 each coordinate Mn(2+). Residues Lys398–Ser521 are regulatory domain.

This sequence belongs to the alpha-IPM synthase/homocitrate synthase family. LeuA type 1 subfamily. As to quaternary structure, homodimer. It depends on Mn(2+) as a cofactor.

It localises to the cytoplasm. It carries out the reaction 3-methyl-2-oxobutanoate + acetyl-CoA + H2O = (2S)-2-isopropylmalate + CoA + H(+). It functions in the pathway amino-acid biosynthesis; L-leucine biosynthesis; L-leucine from 3-methyl-2-oxobutanoate: step 1/4. Functionally, catalyzes the condensation of the acetyl group of acetyl-CoA with 3-methyl-2-oxobutanoate (2-ketoisovalerate) to form 3-carboxy-3-hydroxy-4-methylpentanoate (2-isopropylmalate). The sequence is that of 2-isopropylmalate synthase from Rhodopseudomonas palustris (strain BisB18).